Consider the following 387-residue polypeptide: Phosphoglycerate kinase (387 aa).

Substrate contacts are provided by residues 21–23 (DLN), arginine 36, 59–62 (HLGR), arginine 113, and arginine 146. Residues lysine 197, glutamate 314, and 340–343 (GGDT) each bind ATP.

Belongs to the phosphoglycerate kinase family. In terms of assembly, monomer.

Its subcellular location is the cytoplasm. It carries out the reaction (2R)-3-phosphoglycerate + ATP = (2R)-3-phospho-glyceroyl phosphate + ADP. It participates in carbohydrate degradation; glycolysis; pyruvate from D-glyceraldehyde 3-phosphate: step 2/5. This chain is Phosphoglycerate kinase, found in Proteus mirabilis (strain HI4320).